The primary structure comprises 132 residues: Myelin P2 protein (132 aa).

The residue at position 2 (Ser2) is an N-acetylserine. (9Z)-octadecenoate contacts are provided by residues Arg107 and 127-129 (RIY). Hexadecanoate contacts are provided by residues Arg107 and 127 to 129 (RIY).

It belongs to the calycin superfamily. Fatty-acid binding protein (FABP) family. In terms of assembly, monomer.

It is found in the cytoplasm. Functionally, may play a role in lipid transport protein in Schwann cells. May bind cholesterol. The sequence is that of Myelin P2 protein (PMP2) from Oryctolagus cuniculus (Rabbit).